The chain runs to 174 residues: Adenine phosphoribosyltransferase (174 aa).

This sequence belongs to the purine/pyrimidine phosphoribosyltransferase family. In terms of assembly, homodimer.

It is found in the cytoplasm. It catalyses the reaction AMP + diphosphate = 5-phospho-alpha-D-ribose 1-diphosphate + adenine. It participates in purine metabolism; AMP biosynthesis via salvage pathway; AMP from adenine: step 1/1. In terms of biological role, catalyzes a salvage reaction resulting in the formation of AMP, that is energically less costly than de novo synthesis. In Dichelobacter nodosus (strain VCS1703A), this protein is Adenine phosphoribosyltransferase.